The following is a 319-amino-acid chain: Mas-related G-protein coupled receptor member D (319 aa).

The Extracellular portion of the chain corresponds to 1–30 (MNYTPYSSPAPGLTISPTMDPVTWVYFSVT). The chain crosses the membrane as a helical span at residues 31 to 51 (FLAMATCVCGIVGNSMVIWLL). Residues 52–64 (SFHRVQRSPFCTY) lie on the Cytoplasmic side of the membrane. The helical transmembrane segment at 65 to 85 (VLNLAVADLLFLLCMASLLSL) threads the bilayer. Residues 86 to 92 (ETGPLLT) lie on the Extracellular side of the membrane. Residues 93–113 (ASTSARVYEGMKRIKYFAYTA) traverse the membrane as a helical segment. The Cytoplasmic segment spans residues 114 to 144 (GLSLLTAISTQRCLSVLFPIWYKCHRPQHLS). A helical membrane pass occupies residues 145–165 (GVVCGVLWALALLMNFLASFF). Over 166–184 (CVQFWHPDKYQCFKVDMVF) the chain is Extracellular. The chain crosses the membrane as a helical span at residues 185 to 205 (NSLILGIFMPVMVLTSAIIFI). At 206–220 (RMRKNSLLQRRQPRR) the chain is on the cytoplasmic side. The helical transmembrane segment at 221 to 241 (LYVVILTSVLVFLTCSLPLGI) threads the bilayer. Residues 242 to 260 (NWFLLYWVELPQAVRLLYV) are Extracellular-facing. The chain crosses the membrane as a helical span at residues 261 to 281 (CSSRFSSSLSSSANPVIYFLV). The Cytoplasmic segment spans residues 282–319 (GSQKSHRLQESLGAVLGRALQDEPEGRETPSTCTNDGV).

Belongs to the G-protein coupled receptor 1 family. Mas subfamily. As to expression, co-expressed in the small diameter neurons with P2X3 and VR1 in dorsal root ganglia.

It is found in the cell membrane. May regulate nociceptor function and/or development, including the sensation or modulation of pain. Functions as a specific membrane receptor for beta-alanine. The receptor couples with G-protein G(q) and G(i). The sequence is that of Mas-related G-protein coupled receptor member D (Mrgprd) from Rattus norvegicus (Rat).